The chain runs to 397 residues: G2/mitotic-specific cyclin-B1 (397 aa).

This sequence belongs to the cyclin family. Cyclin AB subfamily. Interacts with the cdc2 protein kinase to form a serine/threonine kinase holoenzyme complex also known as maturation promoting factor (MPF). The cyclin subunit imparts substrate specificity to the complex. When not in a complex with cdc2, interacts with spdya. Interacts with nap1l1. Interacts with nanos1.

The protein localises to the cytoplasm. The protein resides in the cytoskeleton. It localises to the microtubule organizing center. Its subcellular location is the centrosome. It is found in the nucleus. Essential for the control of the cell cycle at the G2/M (mitosis) transition. The polypeptide is G2/mitotic-specific cyclin-B1 (ccnb1) (Xenopus laevis (African clawed frog)).